The primary structure comprises 125 residues: Small ribosomal subunit protein uS12m (125 aa).

Residues 1–51 (MPTKNQLIRHGREEKRRTDRTRALDQCPQKQGVCPRVSTRTPKKPNSAPRK) form a disordered region. Basic and acidic residues predominate over residues 10 to 23 (HGREEKRRTDRTRA).

This sequence belongs to the universal ribosomal protein uS12 family.

It localises to the mitochondrion. Its function is as follows. Protein S12 is involved in the translation initiation step. This chain is Small ribosomal subunit protein uS12m (RPS12), found in Nicotiana sylvestris (Wood tobacco).